Here is a 312-residue protein sequence, read N- to C-terminus: Olfactory receptor 4K17 (312 aa).

Over 1–25 the chain is Extracellular; the sequence is MKLLNQSQVSEFILLGLTSSQDVEF. Asn-5 carries N-linked (GlcNAc...) asparagine glycosylation. A helical membrane pass occupies residues 26 to 49; sequence LLFALFSVIYVVTVLGNLLIIVTV. Residues 50–57 are Cytoplasmic-facing; the sequence is FNTPNLNT. Residues 58–79 form a helical membrane-spanning segment; that stretch reads PMYFLLGNLSFVDMTLASFATP. Over 80-100 the chain is Extracellular; it reads KVILNLLKKQKVISFAGCFTQ. A disulfide bridge connects residues Cys-97 and Cys-189. Residues 101–120 form a helical membrane-spanning segment; the sequence is IFLLHLLGGVEMVLLVSMAF. At 121-139 the chain is on the cytoplasmic side; it reads DRYVAICKPLHYMTIMNKK. Residues 140 to 158 traverse the membrane as a helical segment; the sequence is VCVLLVVTSWLLGLLHSGF. At 159–195 the chain is on the extracellular side; it reads QIPFAVNLPFCGPNVVDSIFCDLPLVTKLACIDIYFV. Residues 196-219 traverse the membrane as a helical segment; the sequence is QVVIVANSGIISLSCFIILLISYS. Residues 220–235 lie on the Cytoplasmic side of the membrane; that stretch reads LILITIKNHSPTGQSK. The chain crosses the membrane as a helical span at residues 236–258; it reads ARSTLTAHITVVILFFGPCIFIY. Residues 259-269 lie on the Extracellular side of the membrane; the sequence is IWPFGNHSVDK. Residue Asn-264 is glycosylated (N-linked (GlcNAc...) asparagine). Residues 270 to 289 traverse the membrane as a helical segment; the sequence is FLAVFYTIITPILNPIIYTL. Residues 290-312 are Cytoplasmic-facing; it reads RNKEMKISMKKLWRAFVNSREDT.

It belongs to the G-protein coupled receptor 1 family.

Its subcellular location is the cell membrane. Odorant receptor. In Homo sapiens (Human), this protein is Olfactory receptor 4K17 (OR4K17).